A 164-amino-acid polypeptide reads, in one-letter code: Cytochrome c oxidase subunit 4, mitochondrial (164 aa).

The transit peptide at 1 to 33 (MFMNSMLRVSRQRAAVRSTVSLYRGFVSASIRR) directs the protein to the mitochondrion. Cys120, His128, Cys143, and Cys146 together coordinate Zn(2+).

Belongs to the cytochrome c oxidase subunit 5B family. As to quaternary structure, component of the cytochrome c oxidase (complex IV, CIV), a multisubunit enzyme composed of a catalytic core of 3 subunits and several supernumerary subunits. The complex exists as a monomer or a dimer and forms supercomplexes (SCs) in the inner mitochondrial membrane with ubiquinol-cytochrome c oxidoreductase (cytochrome b-c1 complex, complex III, CIII).

Its subcellular location is the mitochondrion inner membrane. It participates in energy metabolism; oxidative phosphorylation. Its function is as follows. Component of the cytochrome c oxidase, the last enzyme in the mitochondrial electron transport chain which drives oxidative phosphorylation. The respiratory chain contains 3 multisubunit complexes succinate dehydrogenase (complex II, CII), ubiquinol-cytochrome c oxidoreductase (cytochrome b-c1 complex, complex III, CIII) and cytochrome c oxidase (complex IV, CIV), that cooperate to transfer electrons derived from NADH and succinate to molecular oxygen, creating an electrochemical gradient over the inner membrane that drives transmembrane transport and the ATP synthase. Cytochrome c oxidase is the component of the respiratory chain that catalyzes the reduction of oxygen to water. Electrons originating from reduced cytochrome c in the intermembrane space (IMS) are transferred via the dinuclear copper A center (CU(A)) of subunit 2 and heme A of subunit 1 to the active site in subunit 1, a binuclear center (BNC) formed by heme A3 and copper B (CU(B)). The BNC reduces molecular oxygen to 2 water molecules using 4 electrons from cytochrome c in the IMS and 4 protons from the mitochondrial matrix. The chain is Cytochrome c oxidase subunit 4, mitochondrial (cox4) from Schizosaccharomyces pombe (strain 972 / ATCC 24843) (Fission yeast).